The following is a 374-amino-acid chain: Methylthioribose-1-phosphate isomerase (374 aa).

The Proton donor role is filled by D256.

Belongs to the eIF-2B alpha/beta/delta subunits family. MtnA subfamily.

The protein resides in the cytoplasm. Its subcellular location is the nucleus. The enzyme catalyses 5-(methylsulfanyl)-alpha-D-ribose 1-phosphate = 5-(methylsulfanyl)-D-ribulose 1-phosphate. The protein operates within amino-acid biosynthesis; L-methionine biosynthesis via salvage pathway; L-methionine from S-methyl-5-thio-alpha-D-ribose 1-phosphate: step 1/6. Functionally, catalyzes the interconversion of methylthioribose-1-phosphate (MTR-1-P) into methylthioribulose-1-phosphate (MTRu-1-P). This chain is Methylthioribose-1-phosphate isomerase, found in Leishmania braziliensis.